The sequence spans 316 residues: Triplex capsid protein 2 (316 aa).

It belongs to the herpesviridae TRX2 protein family. In terms of assembly, interacts with TRX1 and major capisd protein/MCP.

Its subcellular location is the virion. It localises to the host nucleus. Its function is as follows. Structural component of the T=16 icosahedral capsid. The capsid is composed of pentamers and hexamers of major capsid protein/MCP, which are linked together by heterotrimers called triplexes. These triplexes are formed by a single molecule of triplex protein 1/TRX1 and two copies of triplex protein 2/TRX2. Additionally, TRX1 is required for efficient transport of TRX2 to the nucleus, which is the site of capsid assembly. The chain is Triplex capsid protein 2 from Homo sapiens (Human).